The following is a 1381-amino-acid chain: Contactin-associated protein 1 (1381 aa).

Residues 1–20 form the signal peptide; that stretch reads MMSLRLFSILLAAVVSGAQG. Residues 21–1284 are Extracellular-facing; that stretch reads WGYYGCNEEL…PYYHDDGWIA (1264 aa). The region spanning 26 to 169 is the F5/8 type C domain; it reads CNEELVGPLY…IGLRLGIYGC (144 aa). An intrachain disulfide couples C26 to C169. Residues N121, N129, and N277 are each glycosylated (N-linked (GlcNAc...) asparagine). 2 Laminin G-like domains span residues 204–356 and 390–539; these read FKTE…AFRC and FRTW…FDTC. C324 and C356 are disulfide-bonded. N-linked (GlcNAc...) asparagine glycans are attached at residues N421, N500, and N519. Intrachain disulfides connect C507–C539, C545–C556, C550–C565, and C567–C577. Residues 544-576 form the EGF-like 1 domain; the sequence is RCSPNMCEHDGRCYQSWDDFICYCELTGYKGVT. Positions 577–796 constitute a Fibrinogen C-terminal domain; the sequence is CHEPLYKESC…NTISFRTGAA (220 aa). N-linked (GlcNAc...) asparagine glycans are attached at residues N598, N654, N665, N764, N805, N844, N861, N949, and N957. Residues 814 to 958 enclose the Laminin G-like 3 domain; sequence FRTSAPSGVF…NASEGTFPNC (145 aa). Disulfide bonds link C931-C958, C962-C975, C969-C984, and C986-C996. The region spanning 962-996 is the EGF-like 2 domain; sequence CTHPRFPCFHGGRCVERYSYYTCDCDLTAFDGPYC. N-linked (GlcNAc...) asparagine glycans are attached at residues N1079 and N1148. Residues 1089-1251 enclose the Laminin G-like 4 domain; it reads FSTSSAPAVL…VQGELSESNC (163 aa). C1210 and C1251 are oxidised to a cystine. Residues 1285 to 1305 traverse the membrane as a helical segment; the sequence is ILLGFLVAFLLLGLVGMLVLF. The Cytoplasmic segment spans residues 1306–1381; it reads YLQNHRYKGS…PQILEESRSE (76 aa). Residues 1317–1381 are disordered; the sequence is HTNEPKATHD…PQILEESRSE (65 aa). Positions 1319–1329 are enriched in basic and acidic residues; the sequence is NEPKATHDSHP. Positions 1329–1366 match the SH3-binding motif; the sequence is PGGKAPLPPSGPAQAPAPTPAPTQVPTPAPAPASGPGP. A compositionally biased stretch (pro residues) spans 1334-1363; it reads PLPPSGPAQAPAPTPAPTQVPTPAPAPASG. At S1380 the chain carries Phosphoserine.

Belongs to the neurexin family. Interacts with CNTN1/contactin in cis form. In terms of tissue distribution, predominantly expressed in brain. In myelinated nerve fibers of the CNS predominantly found in paranodal axoglial junctions. In unmyelinated nerve fibers of the CNS diffusely distributed along the entire surface. Weak expression is detected in ovary, pancreas, colon, lung, heart, intestine and testis.

It localises to the membrane. The protein resides in the cell junction. Its subcellular location is the paranodal septate junction. In terms of biological role, required, with CNTNAP2, for radial and longitudinal organization of myelinated axons. Plays a role in the formation of functional distinct domains critical for saltatory conduction of nerve impulses in myelinated nerve fibers. Demarcates the paranodal region of the axo-glial junction. In association with contactin involved in the signaling between axons and myelinating glial cells. This chain is Contactin-associated protein 1 (Cntnap1), found in Rattus norvegicus (Rat).